The primary structure comprises 555 residues: Glutamine--tRNA ligase (555 aa).

Positions 35 to 45 (PEPNGYLHIGH) match the 'HIGH' region motif. Residues 36-38 (EPN) and 42-48 (HIGHAKS) contribute to the ATP site. Residues Asp68 and Tyr213 each contribute to the L-glutamine site. ATP-binding positions include Thr232, 262–263 (RL), and 270–272 (MSK). A 'KMSKS' region motif is present at residues 269–273 (VMSKR).

Belongs to the class-I aminoacyl-tRNA synthetase family. Monomer.

It is found in the cytoplasm. The catalysed reaction is tRNA(Gln) + L-glutamine + ATP = L-glutaminyl-tRNA(Gln) + AMP + diphosphate. The polypeptide is Glutamine--tRNA ligase (Photobacterium profundum (strain SS9)).